Consider the following 147-residue polypeptide: Large ribosomal subunit protein uL13 (147 aa).

Belongs to the universal ribosomal protein uL13 family. Part of the 50S ribosomal subunit.

This protein is one of the early assembly proteins of the 50S ribosomal subunit, although it is not seen to bind rRNA by itself. It is important during the early stages of 50S assembly. This chain is Large ribosomal subunit protein uL13, found in Pediococcus pentosaceus (strain ATCC 25745 / CCUG 21536 / LMG 10740 / 183-1w).